We begin with the raw amino-acid sequence, 927 residues long: MAGAGGWDPLVGSEIHGFLTYPDLNYEKLVAEAAARWFRPNEIYAILANHARFKIHAQPVDKPVSGTVVLYDRKVVRNFRKDGHNWKKKKDGRTVQEAHEKLKIGNEERVHVYYARGEDDPNFFRRCYWLLDKDLERIVLVHYRQTAEENAMAPPNPEPEVADVPTVNLIHYTSPLTSADSTSGHTELSLPEEINSHGGISASSETGNHDSSLEEFWANLLESSIKNDPKVVTSACGGSFVSSQQINNGPKNSGNIVNTSMASNAIPALNVVSETYATNHGLNQVNANHFGALKHQGDQTQSLLASDVDSQSDQFISSSVKSPMDGNTSIPNEVPARQNSLGLWKYLDDDSPGLGDNPSSVPQSFCPVTNERLLEINEISPEWAYSTETTKVVVIGNFYEQYKHLAGSAMFGVFGEQCVAGDIVQTGVYRFMVGPHTPGKVDFYLTLDGKTPISEICSFTYHVMHGSSLEARLPPSEDDYKRTNLKMQMRLARLLFATNKKKIAPKLLVEGTKVANLMSALPEKEWMDLWNILSDPEGTYVPVTESLLELVLRNRLQEWLVEMVMEGHKSTGRDDLGQGAIHLCSFLGYTWAIRLFSLSGFSLDFRDSSGWTALHWAAYHGRERMVATLLSAGANPSLVTDPTPESPAGLTAADLAARQGYDGLAAYLAEKGLTAHFEAMSLSKDTEQSPSKTRLTKLQSEKFEHLSEQELCLKESLAAYRNAADAASNIQAALRERTLKLQTKAIQLANPEIEASEIVAAMKIQHAFRNYNRKKAMRAAARIQSHFRTWKMRRNFINMRRQVIRIQAAYRGHQVRRQYRKVIWSVGIVEKAILRWRKKRKGLRGIASGMPVVMTVDAEAEPASTAEEDFFQAGRQQAEDRFNRSVVRVQALFRSYKAQQEYRRMKIAHEEAKIEFSEGQLGAACRS.

A DNA-binding region (CG-1) is located at residues 26-152 (YEKLVAEAAA…YRQTAEENAM (127 aa)). The segment at 70 to 96 (LYDRKVVRNFRKDGHNWKKKKDGRTVQ) is necessary and sufficient for nuclear localization. Positions 72–79 (DRKVVRNF) match the Nuclear localization signal motif. The ANK repeat unit spans residues 609-638 (SGWTALHWAAYHGRERMVATLLSAGANPSL). IQ domains are found at residues 757–786 (EIVAAMKIQHAFRNYNRKKAMRAAARIQSH) and 799–828 (MRRQVIRIQAAYRGHQVRRQYRKVIWSVGI). Residues 826-845 (VGIVEKAILRWRKKRKGLRG) form a calmodulin-binding region. The interval 830 to 851 (EKAILRWRKKRKGLRGIASGMP) is necessary and sufficient for nuclear localization. The 30-residue stretch at 882 to 911 (FNRSVVRVQALFRSYKAQQEYRRMKIAHEE) folds into the IQ 3 domain.

It belongs to the CAMTA family.

The protein resides in the nucleus. With respect to regulation, transcriptional activation activity is strongly reduced by calmodulin. Functionally, transcription activator that binds calmodulin in a calcium-dependent manner in vitro. Binds to the DNA consensus sequence 5'-T[AC]CG[CT]GT[GT][GT][GT][GT]T[GT]CG-3'. This is Calmodulin-binding transcription activator CBT from Oryza sativa subsp. japonica (Rice).